Consider the following 357-residue polypeptide: MEVVEVLHMNGGNGDSSYANNSLVQQKVILMTKPITEQAMIDLYSSLFPETLCIADLGCSLGANTFLVVSQLVKIVEKERKKHGFKSPEFYFHFNDLPGNDFNTLFQSLGAFQEDLRKHIGESFGPCFFSGVPGSFYTRLFPSKSLHFVYSSYSLMWLSQVPNGIENNKGNIYMARTSPLSVIKAYYKQYEIDFSNFLKYRSEELMKGGKMVLTLLGRESEDPTSKECCYIWELLAMALNKLVEEGLIKEEKVDAFNIPQYTPSPAEVKYIVEKEGSFTINRLETSRVHWNASNNEKNGGYNVSRCMRAVAEPLLVSHFDKELMDLVFHKYEEIVSDCMSKENTEFINVIISLTKIN.

Tyrosine 18 is an S-adenosyl-L-homocysteine binding site. Residue glutamine 25 participates in benzoate binding. 6 residues coordinate S-adenosyl-L-homocysteine: cysteine 59, asparagine 64, aspartate 96, leucine 97, serine 135, and phenylalanine 136. Tryptophan 157 is a binding site for benzoate. Residues asparagine 168, aspartate 254, phenylalanine 256, and asparagine 257 each contribute to the Mg(2+) site. Glutamine 260 contributes to the benzoate binding site.

The protein belongs to the methyltransferase superfamily. Type-7 methyltransferase family. In terms of tissue distribution, predominantly expressed in petal limbs and tubes of corollas.

The enzyme catalyses benzoate + S-adenosyl-L-methionine = methyl benzoate + S-adenosyl-L-homocysteine. It carries out the reaction salicylate + S-adenosyl-L-methionine = methyl salicylate + S-adenosyl-L-homocysteine. It participates in aromatic compound metabolism. Its function is as follows. Converts benzoic acid into the volatile ester methyl benzoates. This scent, mostly produced in a rhythmical, diurnal manner, attracts the pollinators. This Petunia hybrida (Petunia) protein is S-adenosyl-L-methionine:benzoic acid/salicylic acid carboxyl methyltransferase 1.